The sequence spans 271 residues: 5-deoxy-glucuronate isomerase (271 aa).

This sequence belongs to the isomerase IolB family.

It catalyses the reaction 5-deoxy-D-glucuronate = 5-dehydro-2-deoxy-D-gluconate. It participates in polyol metabolism; myo-inositol degradation into acetyl-CoA; acetyl-CoA from myo-inositol: step 4/7. Involved in the isomerization of 5-deoxy-glucuronate (5DG) to 5-dehydro-2-deoxy-D-gluconate (DKG or 2-deoxy-5-keto-D-gluconate). The sequence is that of 5-deoxy-glucuronate isomerase from Shouchella clausii (strain KSM-K16) (Alkalihalobacillus clausii).